We begin with the raw amino-acid sequence, 271 residues long: Proteasome inhibitor PI31 subunit (271 aa).

An N-acetylalanine modification is found at A2. An important for homodimerization and interaction with FBXO7 region spans residues 2–150 (AGLEVLFASA…PIHEQWEKAR (149 aa)). Phosphoserine is present on residues S153 and S189. The residue at position 205 (R205) is an Omega-N-methylarginine. An Asymmetric dimethylarginine modification is found at R219. Residues 226-271 (SGLPNRLPPGAVPPGARFDPFGPIGTSPSGPNPDHLPPPGYDDMYL) form a disordered region. Omega-N-methylarginine is present on R231. Residue S252 is modified to Phosphoserine. Over residues 255–265 (GPNPDHLPPPG) the composition is skewed to pro residues.

It belongs to the proteasome inhibitor PI31 family. Monomer and homodimer. Interacts with FBXO7.

The protein resides in the cytoplasm. Its subcellular location is the endoplasmic reticulum. Functionally, plays an important role in control of proteasome function. Inhibits the hydrolysis of protein and peptide substrates by the 20S proteasome. Also inhibits the activation of the proteasome by the proteasome regulatory proteins PA700 and PA28. This Mus musculus (Mouse) protein is Proteasome inhibitor PI31 subunit (Psmf1).